A 383-amino-acid polypeptide reads, in one-letter code: Na(+)/H(+) antiporter NhaA (383 aa).

The next 11 helical transmembrane spans lie at 10–30, 56–76, 91–111, 121–141, 150–170, 174–194, 206–226, 254–274, 289–308, 327–347, and 355–375; these read LIGGLILFSAALLAIVVNNSP, LMHWINDGLMAIYFLYIGLEI, IITPAIAAFAGLAMPSLIYLS, GWAIPSATDIAFTLAILALLG, LLVITIAIFDDIAAIAIIAIF, SLSLLSLSLGTLFILAMIICN, VVLGFFAWFCTIKSGVHATLA, PWIIYFILPVFAFANAGISFS, IIWGLFVGKQLGIFSILAVF, GISLLCGIGFTMSLFIGVLAF, and AIKIGVVVGSVLSGFFGYIVL.

It belongs to the NhaA Na(+)/H(+) (TC 2.A.33) antiporter family.

The protein localises to the cell inner membrane. It catalyses the reaction Na(+)(in) + 2 H(+)(out) = Na(+)(out) + 2 H(+)(in). Functionally, na(+)/H(+) antiporter that extrudes sodium in exchange for external protons. The polypeptide is Na(+)/H(+) antiporter NhaA (Francisella tularensis subsp. tularensis (strain WY96-3418)).